We begin with the raw amino-acid sequence, 88 residues long: Small ribosomal subunit protein bS18B (88 aa).

This sequence belongs to the bacterial ribosomal protein bS18 family. In terms of assembly, part of the 30S ribosomal subunit. Forms a tight heterodimer with protein bS6.

Its function is as follows. Binds as a heterodimer with protein bS6 to the central domain of the 16S rRNA, where it helps stabilize the platform of the 30S subunit. This chain is Small ribosomal subunit protein bS18B, found in Mycolicibacterium paratuberculosis (strain ATCC BAA-968 / K-10) (Mycobacterium paratuberculosis).